Consider the following 172-residue polypeptide: Shikimate kinase (172 aa).

ATP is bound at residue 11 to 16 (GAGKST). A Mg(2+)-binding site is contributed by serine 15. Positions 33, 57, and 79 each coordinate substrate. Arginine 117 contacts ATP. Arginine 136 lines the substrate pocket. Position 153 (arginine 153) interacts with ATP.

This sequence belongs to the shikimate kinase family. As to quaternary structure, monomer. Mg(2+) is required as a cofactor.

Its subcellular location is the cytoplasm. It catalyses the reaction shikimate + ATP = 3-phosphoshikimate + ADP + H(+). It functions in the pathway metabolic intermediate biosynthesis; chorismate biosynthesis; chorismate from D-erythrose 4-phosphate and phosphoenolpyruvate: step 5/7. Catalyzes the specific phosphorylation of the 3-hydroxyl group of shikimic acid using ATP as a cosubstrate. The sequence is that of Shikimate kinase from Pseudomonas syringae pv. syringae (strain B728a).